The chain runs to 294 residues: MAEITASMVKELRELTGLGMMECKKALSEAGGDMKAAEDLLRIRSGAKASKAAARIAAEGVISGFITVDGKQGALIEVNCETDFVAKNEDFINFAGDLAKLMVSQSVSDTALLAEMPLAGGETVESVRKALIMKLGENISIRRGISYHAEGRLAMYLHGSRIGVMVDYSGGDEALGKDIAMHIAASKPVCVSSAQVPVDLLEHERQIFTAQAAESGKPANIIEKMVEGRVTKYLAEVTLLGQPFVKDPEQTVEKLLKTKSAEVSNFTLYVVGEGIERKSDDFAAEVMAQVSQSK.

Positions 82-85 (TDFV) are involved in Mg(2+) ion dislocation from EF-Tu.

The protein belongs to the EF-Ts family.

It localises to the cytoplasm. In terms of biological role, associates with the EF-Tu.GDP complex and induces the exchange of GDP to GTP. It remains bound to the aminoacyl-tRNA.EF-Tu.GTP complex up to the GTP hydrolysis stage on the ribosome. This chain is Elongation factor Ts, found in Nitrosomonas eutropha (strain DSM 101675 / C91 / Nm57).